The following is a 123-amino-acid chain: UPF0102 protein Cbei_1183 (123 aa).

This sequence belongs to the UPF0102 family.

The chain is UPF0102 protein Cbei_1183 from Clostridium beijerinckii (strain ATCC 51743 / NCIMB 8052) (Clostridium acetobutylicum).